The sequence spans 425 residues: Enolase (425 aa).

Glutamine 162 lines the (2R)-2-phosphoglycerate pocket. The Proton donor role is filled by glutamate 204. Positions 241, 282, and 309 each coordinate Mg(2+). Residues lysine 334, arginine 363, serine 364, and lysine 385 each coordinate (2R)-2-phosphoglycerate. The active-site Proton acceptor is the lysine 334.

This sequence belongs to the enolase family. Requires Mg(2+) as cofactor.

It localises to the cytoplasm. It is found in the secreted. The protein resides in the cell surface. The catalysed reaction is (2R)-2-phosphoglycerate = phosphoenolpyruvate + H2O. The protein operates within carbohydrate degradation; glycolysis; pyruvate from D-glyceraldehyde 3-phosphate: step 4/5. Functionally, catalyzes the reversible conversion of 2-phosphoglycerate (2-PG) into phosphoenolpyruvate (PEP). It is essential for the degradation of carbohydrates via glycolysis. The protein is Enolase of Corynebacterium efficiens (strain DSM 44549 / YS-314 / AJ 12310 / JCM 11189 / NBRC 100395).